Here is a 236-residue protein sequence, read N- to C-terminus: Phosphoribosylaminoimidazole-succinocarboxamide synthase (236 aa).

It belongs to the SAICAR synthetase family.

It carries out the reaction 5-amino-1-(5-phospho-D-ribosyl)imidazole-4-carboxylate + L-aspartate + ATP = (2S)-2-[5-amino-1-(5-phospho-beta-D-ribosyl)imidazole-4-carboxamido]succinate + ADP + phosphate + 2 H(+). Its pathway is purine metabolism; IMP biosynthesis via de novo pathway; 5-amino-1-(5-phospho-D-ribosyl)imidazole-4-carboxamide from 5-amino-1-(5-phospho-D-ribosyl)imidazole-4-carboxylate: step 1/2. This is Phosphoribosylaminoimidazole-succinocarboxamide synthase from Pelodictyon phaeoclathratiforme (strain DSM 5477 / BU-1).